We begin with the raw amino-acid sequence, 244 residues long: Phosphoadenosine 5'-phosphosulfate reductase (244 aa).

Cysteine 239 (nucleophile; cysteine thiosulfonate intermediate) is an active-site residue.

This sequence belongs to the PAPS reductase family. CysH subfamily.

The protein resides in the cytoplasm. The enzyme catalyses [thioredoxin]-disulfide + sulfite + adenosine 3',5'-bisphosphate + 2 H(+) = [thioredoxin]-dithiol + 3'-phosphoadenylyl sulfate. It functions in the pathway sulfur metabolism; hydrogen sulfide biosynthesis; sulfite from sulfate: step 3/3. In terms of biological role, catalyzes the formation of sulfite from phosphoadenosine 5'-phosphosulfate (PAPS) using thioredoxin as an electron donor. The polypeptide is Phosphoadenosine 5'-phosphosulfate reductase (Zymomonas mobilis subsp. mobilis (strain ATCC 31821 / ZM4 / CP4)).